The sequence spans 137 residues: MLQPKRTKFRKVQKGRNTGLAHRGSTVSFGSIAIKATERGRMTARQIEAARRTISRRIKRGGKIFIRVFPDKPITEKPLEVRMGNGKGNVEYWVCEIKPGKILYEIEGVNDELATQAFKLAAAKLPFKTTIVTRTVM.

This sequence belongs to the universal ribosomal protein uL16 family. Part of the 50S ribosomal subunit.

In terms of biological role, binds 23S rRNA and is also seen to make contacts with the A and possibly P site tRNAs. This chain is Large ribosomal subunit protein uL16, found in Acinetobacter baylyi (strain ATCC 33305 / BD413 / ADP1).